A 100-amino-acid polypeptide reads, in one-letter code: Urease subunit gamma (100 aa).

Belongs to the urease gamma subunit family. Heterotrimer of UreA (gamma), UreB (beta) and UreC (alpha) subunits. Three heterotrimers associate to form the active enzyme.

The protein localises to the cytoplasm. The enzyme catalyses urea + 2 H2O + H(+) = hydrogencarbonate + 2 NH4(+). Its pathway is nitrogen metabolism; urea degradation; CO(2) and NH(3) from urea (urease route): step 1/1. The sequence is that of Urease subunit gamma from Marinomonas sp. (strain MWYL1).